Reading from the N-terminus, the 498-residue chain is Calcitonin receptor (498 aa).

Residues 1–29 (MRFTLTRWCLTLFIFLNRPLPVLPDSADG) form the signal peptide. At 30-147 (AHTPTLEPEP…FTPDKLQNAY (118 aa)) the chain is on the extracellular side. Disulfide bonds link Cys56–Cys82, Cys73–Cys113, and Cys96–Cys135. Asn74, Asn126, and Asn131 each carry an N-linked (GlcNAc...) asparagine glycan. Residues 148 to 170 (ILYYLAIVGHSLSILTLLISLGI) traverse the membrane as a helical segment. Residues 171 to 198 (FMFLRYFNLLAPFNALLYPTRSISCQRV) are Cytoplasmic-facing. The chain crosses the membrane as a helical span at residues 199 to 219 (TLHKNMFLTYVLNSIIIIVHL). Residues 220-236 (VVIVPNGELVKRDPPIC) lie on the Extracellular side of the membrane. Cysteines 236 and 306 form a disulfide. The chain crosses the membrane as a helical span at residues 237–259 (KVLHFFHQYMMSCNYFWMLCEGV). Residues 260–276 (YLHTLIVVSVFAEGQRL) are Cytoplasmic-facing. Residues 277-297 (WWYHVLGWGFPLIPTTAHAIT) form a helical membrane-spanning segment. Residues 298–313 (RAVLFNDNCWLSVDTN) lie on the Extracellular side of the membrane. Residues 314–337 (LLYIIHGPVMAALVVNFFFLLNIL) form a helical membrane-spanning segment. Over 338–357 (RVLVKKLKESQEAESHMYLK) the chain is Cytoplasmic. A helical transmembrane segment spans residues 358–376 (AVRATLILVPLLGVQFVVL). Residues 377-384 (PWRPSTPL) lie on the Extracellular side of the membrane. Residues 385–411 (LGKIYDYVVHSLIHFQGFFVAIIYCFC) traverse the membrane as a helical segment. The Cytoplasmic segment spans residues 412–498 (NHEVQGALKR…MEVLEQETSA (87 aa)).

The protein belongs to the G-protein coupled receptor 2 family. In terms of assembly, heterodimer of CALCR and RAMP1, RAMP2 or RAMP3; the receptor complexes function as AMYR1, AMYR2 and AMYR3 receptors, respectively, and respond to amylin/IAPP, calcitonin/CT and CGRP1 ligands. Interacts with GPRASP2.

It is found in the cell membrane. In terms of biological role, g protein-coupled receptor activated by ligand peptides amylin (IAPP), calcitonin (CT/CALCA) and calcitonin gene-related peptide type 1 (CGRP1/CALCA). CALCR interacts with receptor-activity-modifying proteins RAMP1, 2 and 3 to form receptor complexes AMYR1, 2 and 3, respectively. IAPP, CT and CGRP1 activate CALCR and AMYRs with distinct modes of receptor activation resulting in specific phenotypes. Ligand binding causes a conformation change that triggers signaling via guanine nucleotide-binding proteins (G proteins) and modulates the activity of downstream effectors. Activates cAMP-dependent pathway. This chain is Calcitonin receptor, found in Sus scrofa (Pig).